The following is a 210-amino-acid chain: 23.5 kDa heat shock protein, mitochondrial (210 aa).

The transit peptide at 1 to 20 (MASSSALALRRLLSSSTVAV) directs the protein to the mitochondrion. The sHSP domain maps to 102-210 (MGASGVRRGW…RNNIRHINVD (109 aa)).

This sequence belongs to the small heat shock protein (HSP20) family. In terms of assembly, may form oligomeric structures.

Its subcellular location is the mitochondrion. This is 23.5 kDa heat shock protein, mitochondrial (HSP23.5) from Arabidopsis thaliana (Mouse-ear cress).